Here is a 124-residue protein sequence, read N- to C-terminus: Probable glycine cleavage system H protein (124 aa).

The Lipoyl-binding domain maps to 23-104 (VATVGITDYA…PYKNWLVKIR (82 aa)). K64 is modified (N6-lipoyllysine).

Belongs to the GcvH family. In terms of assembly, the glycine cleavage system is composed of four proteins: P, T, L and H. It depends on (R)-lipoate as a cofactor.

Its function is as follows. The glycine cleavage system catalyzes the degradation of glycine. The H protein shuttles the methylamine group of glycine from the P protein to the T protein. This Picrophilus torridus (strain ATCC 700027 / DSM 9790 / JCM 10055 / NBRC 100828 / KAW 2/3) protein is Probable glycine cleavage system H protein.